The chain runs to 464 residues: Argininosuccinate lyase (464 aa).

The protein belongs to the lyase 1 family. Argininosuccinate lyase subfamily.

The protein localises to the cytoplasm. The catalysed reaction is 2-(N(omega)-L-arginino)succinate = fumarate + L-arginine. The protein operates within amino-acid biosynthesis; L-arginine biosynthesis; L-arginine from L-ornithine and carbamoyl phosphate: step 3/3. The protein is Argininosuccinate lyase of Herminiimonas arsenicoxydans.